Consider the following 134-residue polypeptide: Phosphoribosyl-AMP cyclohydrolase (134 aa).

Aspartate 90 serves as a coordination point for Mg(2+). Residue cysteine 91 coordinates Zn(2+). Mg(2+) contacts are provided by aspartate 92 and aspartate 94. Residues cysteine 107 and cysteine 114 each contribute to the Zn(2+) site.

This sequence belongs to the PRA-CH family. In terms of assembly, homodimer. The cofactor is Mg(2+). Requires Zn(2+) as cofactor.

It is found in the cytoplasm. It carries out the reaction 1-(5-phospho-beta-D-ribosyl)-5'-AMP + H2O = 1-(5-phospho-beta-D-ribosyl)-5-[(5-phospho-beta-D-ribosylamino)methylideneamino]imidazole-4-carboxamide. It participates in amino-acid biosynthesis; L-histidine biosynthesis; L-histidine from 5-phospho-alpha-D-ribose 1-diphosphate: step 3/9. Functionally, catalyzes the hydrolysis of the adenine ring of phosphoribosyl-AMP. The chain is Phosphoribosyl-AMP cyclohydrolase from Arthrobacter sp. (strain FB24).